The following is a 131-amino-acid chain: Leptin receptor gene-related protein (131 aa).

4 consecutive transmembrane segments (helical) span residues 7–27, 32–52, 69–89, and 100–120; these read LVAL…GCAL, VYWP…HFIA, LAYF…VILA, and GLVL…FLVF.

Belongs to the OB-RGRP/VPS55 family. As to quaternary structure, interacts with LEPR. Interacts with RAB13.

It localises to the golgi apparatus membrane. It is found in the endosome membrane. Negatively regulates leptin receptor (LEPR) cell surface expression, and thus decreases response to leptin/LEP. Negatively regulates growth hormone (GH) receptor cell surface expression in liver. May play a role in liver resistance to GH during periods of reduced nutrient availability. This Sus scrofa (Pig) protein is Leptin receptor gene-related protein (LEPROT).